Here is a 937-residue protein sequence, read N- to C-terminus: Beta-mannosidase A (937 aa).

The signal sequence occupies residues 1–23 (MRALPTTATTLLGVLFFPSASRS). Residues Asn42, Asn82, Asn250, Asn285, Asn319, Asn329, and Asn350 are each glycosylated (N-linked (GlcNAc...) asparagine). Glu482 functions as the Proton donor in the catalytic mechanism. 4 N-linked (GlcNAc...) asparagine glycosylation sites follow: Asn553, Asn612, Asn743, and Asn796.

It belongs to the glycosyl hydrolase 2 family. Beta-mannosidase A subfamily. As to quaternary structure, homodimer. In terms of processing, N-glycosylated.

The protein resides in the secreted. It carries out the reaction Hydrolysis of terminal, non-reducing beta-D-mannose residues in beta-D-mannosides.. It participates in glycan metabolism; N-glycan degradation. In terms of biological role, exoglycosidase that cleaves the single beta-linked mannose residue from the non-reducing end of beta-mannosidic oligosaccharides of various complexity and length. Involved in the degradation of polymeric mannan and galactomannan. Releases the terminal mannose residue from mannotriose and is somewaht less active on other mannooligosaccharides. This is Beta-mannosidase A (mndA) from Aspergillus aculeatus.